Here is a 186-residue protein sequence, read N- to C-terminus: UPF0301 protein LHK_02881 (186 aa).

Belongs to the UPF0301 (AlgH) family.

In Laribacter hongkongensis (strain HLHK9), this protein is UPF0301 protein LHK_02881.